Reading from the N-terminus, the 554-residue chain is Hydroxylamine reductase (554 aa).

Residues Cys3, Cys6, Cys18, and Cys25 each contribute to the [2Fe-2S] cluster site. The hybrid [4Fe-2O-2S] cluster site is built by His252, Glu276, Cys320, Cys408, Cys436, Cys461, Glu495, and Lys497. Cys408 is modified (cysteine persulfide).

Belongs to the HCP family. It depends on [2Fe-2S] cluster as a cofactor. Hybrid [4Fe-2O-2S] cluster serves as cofactor.

The protein localises to the cytoplasm. The catalysed reaction is A + NH4(+) + H2O = hydroxylamine + AH2 + H(+). Its function is as follows. Catalyzes the reduction of hydroxylamine to form NH(3) and H(2)O. In Shewanella baltica (strain OS223), this protein is Hydroxylamine reductase.